The chain runs to 105 residues: Heat shock protein HspQ (105 aa).

The protein belongs to the HspQ family.

The protein resides in the cytoplasm. In terms of biological role, involved in the degradation of certain denaturated proteins, including DnaA, during heat shock stress. This is Heat shock protein HspQ from Blochmanniella pennsylvanica (strain BPEN).